We begin with the raw amino-acid sequence, 251 residues long: tRNA (guanine-N(1)-)-methyltransferase (251 aa).

Residues G113 and 133-138 contribute to the S-adenosyl-L-methionine site; that span reads IGDYVL.

It belongs to the RNA methyltransferase TrmD family. As to quaternary structure, homodimer.

It localises to the cytoplasm. The enzyme catalyses guanosine(37) in tRNA + S-adenosyl-L-methionine = N(1)-methylguanosine(37) in tRNA + S-adenosyl-L-homocysteine + H(+). In terms of biological role, specifically methylates guanosine-37 in various tRNAs. In Methylococcus capsulatus (strain ATCC 33009 / NCIMB 11132 / Bath), this protein is tRNA (guanine-N(1)-)-methyltransferase.